Here is a 643-residue protein sequence, read N- to C-terminus: Clathrin interactor 1 (643 aa).

One can recognise an ENTH domain in the interval asparagine 16–arginine 149. Arginine 29 is an a 1,2-diacyl-sn-glycero-3-phospho-(1D-myo-inositol-4,5-bisphosphate) binding site. The interaction with VTI1B stretch occupies residues phenylalanine 52–tyrosine 54. Arginine 67 is a binding site for a 1,2-diacyl-sn-glycero-3-phospho-(1D-myo-inositol-4,5-bisphosphate). Interaction with VTI1B stretches follow at residues serine 94–arginine 96 and aspartate 142–lysine 153. 8 positions are modified to phosphoserine: serine 163, serine 166, serine 173, serine 205, serine 210, serine 227, serine 245, and serine 299. The tract at residues phenylalanine 219 to aspartate 331 is disordered. The segment covering lysine 222–lysine 239 has biased composition (basic and acidic residues). Over residues proline 300 to glutamine 310 the composition is skewed to polar residues. Residue threonine 308 is modified to Phosphothreonine. Over residues serine 311 to serine 323 the composition is skewed to low complexity. Serine 312 and serine 642 each carry phosphoserine.

This sequence belongs to the epsin family. As to quaternary structure, binds clathrin heavy chain and AP-2. Interacts with VTI1B. Interacts with GGA2 (via GAE domain). Interacts with AP1G1 (via GAE domain). Interacts with AP1G2 (via GAE domain).

The protein localises to the cytoplasm. It is found in the perinuclear region. It localises to the membrane. The protein resides in the cytoplasmic vesicle. Its subcellular location is the clathrin-coated vesicle. In terms of biological role, binds to membranes enriched in phosphatidylinositol 4,5-bisphosphate (PtdIns(4,5)P2). May have a role in transport via clathrin-coated vesicles from the trans-Golgi network to endosomes. Stimulates clathrin assembly. The protein is Clathrin interactor 1 (CLINT1) of Bos taurus (Bovine).